The primary structure comprises 419 residues: eIF5-mimic protein 2 (419 aa).

Methionine 1 carries the N-acetylmethionine modification. Residues 1-15 (MNNQKQQKPTLSGQR) show a composition bias toward polar residues. The tract at residues 1–26 (MNNQKQQKPTLSGQRFKTRKRDEKER) is disordered. The residue at position 12 (serine 12) is a Phosphoserine. In terms of domain architecture, W2 spans 247 to 414 (NQQTIGARKE…KNAEEESESE (168 aa)). Lysine 368 participates in a covalent cross-link: Glycyl lysine isopeptide (Lys-Gly) (interchain with G-Cter in SUMO2). Phosphoserine is present on residues serine 411 and serine 413.

It belongs to the BZW family.

In terms of biological role, translation initiation regulator which represses repeat-associated non-AUG (RAN) initiated translation probably by acting as a competitive inhibitor of eukaryotic translation initiation factor 5 (EIF5) function. Enhances histone H4 gene transcription but does not seem to bind DNA directly. This Pongo abelii (Sumatran orangutan) protein is eIF5-mimic protein 2 (BZW1).